Here is a 109-residue protein sequence, read N- to C-terminus: Ig kappa chain V region S211 (109 aa).

The framework-1 stretch occupies residues 1–23 (DVQMTQSPSYLAASPGESVSISC). The segment at 24-35 (KASNKSISNNLA) is complementarity-determining-1. The interval 36–50 (WYZZKPGKANKLLIS) is framework-2. Residues 51 to 57 (SGSTLQS) are complementarity-determining-2. Positions 58 to 89 (GTPSRFSGSGSDTDFTLTIRSLEFQDFAVYYC) are framework-3. Positions 90–98 (ZZYNEPYYT) are complementarity-determining-3. Residues 99 to 108 (FGAGTMLELK) are framework-4.

The sequence is that of Ig kappa chain V region S211 from Rattus norvegicus (Rat).